The sequence spans 152 residues: 6,7-dimethyl-8-ribityllumazine synthase (152 aa).

5-amino-6-(D-ribitylamino)uracil-binding positions include Phe21, 55–57, and 79–81; these read AFE and CVI. 84 to 85 is a (2S)-2-hydroxy-3-oxobutyl phosphate binding site; the sequence is ST. The Proton donor role is filled by His87. Phe112 is a 5-amino-6-(D-ribitylamino)uracil binding site. Residue Arg126 participates in (2S)-2-hydroxy-3-oxobutyl phosphate binding.

This sequence belongs to the DMRL synthase family. Forms an icosahedral capsid composed of 60 subunits, arranged as a dodecamer of pentamers.

It carries out the reaction (2S)-2-hydroxy-3-oxobutyl phosphate + 5-amino-6-(D-ribitylamino)uracil = 6,7-dimethyl-8-(1-D-ribityl)lumazine + phosphate + 2 H2O + H(+). Its pathway is cofactor biosynthesis; riboflavin biosynthesis; riboflavin from 2-hydroxy-3-oxobutyl phosphate and 5-amino-6-(D-ribitylamino)uracil: step 1/2. In terms of biological role, catalyzes the formation of 6,7-dimethyl-8-ribityllumazine by condensation of 5-amino-6-(D-ribitylamino)uracil with 3,4-dihydroxy-2-butanone 4-phosphate. This is the penultimate step in the biosynthesis of riboflavin. The protein is 6,7-dimethyl-8-ribityllumazine synthase of Staphylococcus saprophyticus subsp. saprophyticus (strain ATCC 15305 / DSM 20229 / NCIMB 8711 / NCTC 7292 / S-41).